The following is a 92-amino-acid chain: Small ribosomal subunit protein uS17 (92 aa).

The protein belongs to the universal ribosomal protein uS17 family. In terms of assembly, part of the 30S ribosomal subunit.

Its function is as follows. One of the primary rRNA binding proteins, it binds specifically to the 5'-end of 16S ribosomal RNA. The polypeptide is Small ribosomal subunit protein uS17 (Corynebacterium glutamicum (strain ATCC 13032 / DSM 20300 / JCM 1318 / BCRC 11384 / CCUG 27702 / LMG 3730 / NBRC 12168 / NCIMB 10025 / NRRL B-2784 / 534)).